Consider the following 524-residue polypeptide: Lysophospholipid acyltransferase LPCAT4 (524 aa).

Transmembrane regions (helical) follow at residues 40-62 and 87-107; these read CLLG…FLLW and TVCH…LGFL. Residues 129–134 carry the HXXXXD motif motif; sequence HSTFFD. Asn152 is a glycosylation site (N-linked (GlcNAc...) asparagine). The interval 489 to 524 is disordered; it reads PPHTSRGTSQTPNASSPGNPTALANGTVQAPKQKGD. The span at 493-518 shows a compositional bias: polar residues; sequence SRGTSQTPNASSPGNPTALANGTVQA.

Belongs to the 1-acyl-sn-glycerol-3-phosphate acyltransferase family. Widely expressed with predominant level in brain.

It localises to the endoplasmic reticulum membrane. The catalysed reaction is a 1-acyl-sn-glycero-3-phosphoethanolamine + an acyl-CoA = a 1,2-diacyl-sn-glycero-3-phosphoethanolamine + CoA. The enzyme catalyses a 1-O-(1Z-alkenyl)-sn-glycero-3-phosphoethanolamine + an acyl-CoA = a 1-O-(1Z-alkenyl)-2-acyl-sn-glycero-3-phosphoethanolamine + CoA. It carries out the reaction a 1-acyl-sn-glycero-3-phosphocholine + an acyl-CoA = a 1,2-diacyl-sn-glycero-3-phosphocholine + CoA. It catalyses the reaction a 1-O-alkyl-sn-glycero-3-phosphocholine + acetyl-CoA = a 1-O-alkyl-2-acetyl-sn-glycero-3-phosphocholine + CoA. The catalysed reaction is a 1-acyl-sn-glycero-3-phospho-L-serine + an acyl-CoA = a 1,2-diacyl-sn-glycero-3-phospho-L-serine + CoA. The enzyme catalyses octanoyl-CoA + a 1-acyl-sn-glycero-3-phosphoethanolamine = 1-acyl-2-octanoyl-sn-glycero-3-phosphoethanolamine + CoA. It carries out the reaction a 1-acyl-sn-glycero-3-phosphoethanolamine + hexadecanoyl-CoA = 1-acyl-2-hexadecanoyl-sn-glycero-3-phosphoethanolamine + CoA. It catalyses the reaction a 1-acyl-sn-glycero-3-phosphoethanolamine + octadecanoyl-CoA = 1-acyl-2-octadecanoyl-sn-glycero-3-phosphoethanolamine + CoA. The catalysed reaction is a 1-acyl-sn-glycero-3-phosphoethanolamine + (9Z)-octadecenoyl-CoA = 1-acyl-2-(9Z)-octadecenoyl-sn-glycero-3-phosphoethanolamine + CoA. The enzyme catalyses a 1-acyl-sn-glycero-3-phosphoethanolamine + (5Z,8Z,11Z,14Z)-eicosatetraenoyl-CoA = 1-acyl-2-(5Z,8Z,11Z,14Z)-eicosatetraenoyl-sn-glycero-3-phosphoethanolamine + CoA. It carries out the reaction a 1-O-(1Z-alkenyl)-sn-glycero-3-phosphoethanolamine + octanoyl-CoA = 1-O-(1Z)-alkenyl-2-octanoyl-sn-glycero-3-phosphoethanolamine + CoA. It catalyses the reaction a 1-O-(1Z-alkenyl)-sn-glycero-3-phosphoethanolamine + hexadecanoyl-CoA = 1-O-(1Z)-alkenyl-2-hexadecanoyl-sn-glycero-3-phosphoethanolamine + CoA. The catalysed reaction is a 1-O-(1Z-alkenyl)-sn-glycero-3-phosphoethanolamine + octadecanoyl-CoA = 1-O-(1Z)-alkenyl-2-octadecanoyl-sn-glycero-3-phosphoethanolamine + CoA. The enzyme catalyses a 1-O-(1Z-alkenyl)-sn-glycero-3-phosphoethanolamine + (9Z)-octadecenoyl-CoA = 1-O-(1Z)-alkenyl-2-(9Z)-octadecenoyl-sn-glycero-3-phosphoethanolamine + CoA. It carries out the reaction a 1-O-(1Z-alkenyl)-sn-glycero-3-phosphoethanolamine + (5Z,8Z,11Z,14Z)-eicosatetraenoyl-CoA = 1-O-(1Z)-alkenyl-2-(5Z,8Z,11Z,14Z)-eicosatetraenoyl-sn-glycero-3-phosphoethanolamine + CoA. It catalyses the reaction a 1-acyl-sn-glycero-3-phosphocholine + hexadecanoyl-CoA = 1-acyl-2-hexadecanoyl-sn-glycero-3-phosphocholine + CoA. The catalysed reaction is a 1-acyl-sn-glycero-3-phosphocholine + (9Z)-octadecenoyl-CoA = a 1-acyl-2-(9Z)-octadecenoyl-sn-glycero-3-phosphocholine + CoA. The enzyme catalyses 1-O-hexadecyl-sn-glycero-3-phosphocholine + (9Z)-octadecenoyl-CoA = 1-O-hexadecyl-2-(9Z)-octadecenoyl-sn-glycero-3-phosphocholine + CoA. It carries out the reaction 1-O-hexadecyl-sn-glycero-3-phosphocholine + (5Z,8Z,11Z,14Z)-eicosatetraenoyl-CoA = 1-O-hexadecyl-2-(5Z,8Z,11Z,14Z)-eicosatetraenoyl-sn-glycero-3-phosphocholine + CoA. It catalyses the reaction 1-hexadecanoyl-sn-glycero-3-phospho-L-serine + (9Z)-octadecenoyl-CoA = 1-hexadecanoyl-2-(9Z-octadecenoyl)-sn-glycero-3-phospho-L-serine + CoA. The catalysed reaction is 1-octadecanoyl-sn-glycero-3-phospho-(1'-sn-glycerol) + (9Z)-octadecenoyl-CoA = 1-octadecanoyl-2-(9Z-octadecenoyl)-sn-glycero-3-phospho-(1'-sn-glycerol) + CoA. The enzyme catalyses 1-octadecanoyl-sn-glycero-3-phospho-(1'-sn-glycerol) + (5Z,8Z,11Z,14Z)-eicosatetraenoyl-CoA = 1-octadecanoyl-2-(5Z,8Z,11Z,14Z-eicosatetraenoyl)-sn-glycero-3-phospho-(1'-sn-glycerol) + CoA. Its pathway is lipid metabolism; phospholipid metabolism. Its function is as follows. Displays acyl-CoA-dependent lysophospholipid acyltransferase activity with a subset of lysophospholipids as substrates; converts lysophosphatidylethanolamine to phosphatidylethanolamine, lysophosphatidylcholine to phosphatidycholine, 1-alkenyl-lysophatidylethanolamine to 1-alkenyl-phosphatidylethanolamine, lysophosphatidylglycerol and alkyl-lysophosphatidylcholine to phosphatidylglycerol and alkyl-phosphatidylcholine, respectively. In contrast, has no lysophosphatidylinositol, glycerol-3-phosphate, diacylglycerol or lysophosphatidic acid acyltransferase activity. Prefers long chain acyl-CoAs (C16, C18) as acyl donors. The chain is Lysophospholipid acyltransferase LPCAT4 (LPCAT4) from Homo sapiens (Human).